A 103-amino-acid chain; its full sequence is Large ribosomal subunit protein bL21 (103 aa).

This sequence belongs to the bacterial ribosomal protein bL21 family. In terms of assembly, part of the 50S ribosomal subunit. Contacts protein L20.

Its function is as follows. This protein binds to 23S rRNA in the presence of protein L20. The chain is Large ribosomal subunit protein bL21 from Shewanella baltica (strain OS223).